The following is a 110-amino-acid chain: Nucleoid-associated protein YE3092 (110 aa).

This sequence belongs to the YbaB/EbfC family. In terms of assembly, homodimer.

It is found in the cytoplasm. It localises to the nucleoid. Binds to DNA and alters its conformation. May be involved in regulation of gene expression, nucleoid organization and DNA protection. This chain is Nucleoid-associated protein YE3092, found in Yersinia enterocolitica serotype O:8 / biotype 1B (strain NCTC 13174 / 8081).